A 199-amino-acid polypeptide reads, in one-letter code: MSVIDLPEFFYKAILLLIESGVILGSLGVVLFTNIVYSAFLLGWVPVCISFLYILLNADFVAAVQILIYVGTINVLIVFAVMLINKPQYFRFLKYWTVGDGTALALCTSPFLSIIAAILSTPWSKISLIVLSNKIVEEPLTDNVQRIGFHSLTDSPLPFELLSIILLVAPVGAITMARREEAVEAEESEALKTKDDFPF.

5 consecutive transmembrane segments (helical) span residues 13–33, 35–55, 64–84, 96–118, and 157–177; these read AILLLIESGVILGSLGVVLFT, IVYSAFLLGWVPVCISFLYIL, VQILIYVGTINVLIVFAVMLI, WTVGDGTALALCTSPFLSIIAAI, and LPFELLSIILLVAPVGAITMA.

It belongs to the complex I subunit 6 family. In terms of assembly, NDH is composed of at least 16 different subunits, 5 of which are encoded in the nucleus.

Its subcellular location is the plastid. The protein resides in the chloroplast thylakoid membrane. It catalyses the reaction a plastoquinone + NADH + (n+1) H(+)(in) = a plastoquinol + NAD(+) + n H(+)(out). The catalysed reaction is a plastoquinone + NADPH + (n+1) H(+)(in) = a plastoquinol + NADP(+) + n H(+)(out). Its function is as follows. NDH shuttles electrons from NAD(P)H:plastoquinone, via FMN and iron-sulfur (Fe-S) centers, to quinones in the photosynthetic chain and possibly in a chloroplast respiratory chain. The immediate electron acceptor for the enzyme in this species is believed to be plastoquinone. Couples the redox reaction to proton translocation, and thus conserves the redox energy in a proton gradient. This chain is NAD(P)H-quinone oxidoreductase subunit 6, chloroplastic (ndhG), found in Huperzia lucidula (Shining clubmoss).